Consider the following 108-residue polypeptide: MSLAKAKEIVSGNPVAVFSKTYCPFCVSVKDLLSKLGATFKAVELDSEKDGSEIQAALAEWTGQRTVPNVFIGRKHIGGCDATTALHREGKLLPLLTEAGAIAKTSTA.

The region spanning Leu-3–Ala-103 is the Glutaredoxin domain. Residues Cys-23 and Cys-26 are joined by a disulfide bond.

Belongs to the glutaredoxin family. CPYC subfamily.

The protein localises to the cytoplasm. Functionally, has a glutathione-disulfide oxidoreductase activity in the presence of NADPH and glutathione reductase. Reduces low molecular weight disulfides and proteins. This chain is Glutaredoxin, found in Solanum lycopersicum (Tomato).